Consider the following 160-residue polypeptide: Lipoprotein signal peptidase (160 aa).

3 consecutive transmembrane segments (helical) span residues 13-33 (IYITTIIFILILDISSKHLII), 72-92 (WFLSTVSILTILVMTRIITKL), and 104-124 (SLIIAGATGNLIDRIFYGFVV). Residues Asp125 and Asp143 contribute to the active site. A helical membrane pass occupies residues 134–154 (WHFATFNIADCSIFIGIIILM).

It belongs to the peptidase A8 family.

It is found in the cell inner membrane. It carries out the reaction Release of signal peptides from bacterial membrane prolipoproteins. Hydrolyzes -Xaa-Yaa-Zaa-|-(S,diacylglyceryl)Cys-, in which Xaa is hydrophobic (preferably Leu), and Yaa (Ala or Ser) and Zaa (Gly or Ala) have small, neutral side chains.. Its pathway is protein modification; lipoprotein biosynthesis (signal peptide cleavage). This protein specifically catalyzes the removal of signal peptides from prolipoproteins. The protein is Lipoprotein signal peptidase of Buchnera aphidicola subsp. Acyrthosiphon pisum (strain Tuc7).